We begin with the raw amino-acid sequence, 166 residues long: Probable RNA-binding protein EIF1AD (166 aa).

Residues 5–89 form the S1-like domain; the sequence is TKRKHVVKEV…VKAEISFVLC (85 aa). The Nuclear localization signal motif lies at 6-12; sequence KRKHVVK. Thr33 is modified (phosphothreonine). A Nuclear localization signal motif is present at residues 56–65; it reads KYRKNIWIKR. The disordered stretch occupies residues 99–166; the sequence is DGHWPEAFSQ…EEESEEEEAA (68 aa). Basic and acidic residues predominate over residues 110 to 119; the sequence is TEKDNNDRNR. A phosphoserine mark is found at Ser132, Ser136, Ser137, Ser138, Ser156, and Ser160. The segment covering 156–166 has biased composition (acidic residues); the sequence is SEEESEEEEAA.

This sequence belongs to the EIF1AD family. Interacts with GAPDH and STAT1.

Its subcellular location is the nucleus. Its function is as follows. Plays a role into cellular response to oxidative stress. Decreases cell proliferation. The chain is Probable RNA-binding protein EIF1AD (EIF1AD) from Bos taurus (Bovine).